The sequence spans 125 residues: Cyclin-dependent protein kinase inhibitor SMR16 (125 aa).

Its function is as follows. Probable cyclin-dependent protein kinase (CDK) inhibitor that functions as a repressor of mitosis in the endoreduplication cell cycle. This chain is Cyclin-dependent protein kinase inhibitor SMR16, found in Arabidopsis thaliana (Mouse-ear cress).